We begin with the raw amino-acid sequence, 227 residues long: PKHD-type hydroxylase GDI1238/Gdia_1949 (227 aa).

One can recognise a Fe2OG dioxygenase domain in the interval 78 to 178; that stretch reads RVVPPLFNRY…RLASFFWTQS (101 aa). His-96, Asp-98, and His-159 together coordinate Fe cation. Residue Arg-169 participates in 2-oxoglutarate binding.

The cofactor is Fe(2+). Requires L-ascorbate as cofactor.

This Gluconacetobacter diazotrophicus (strain ATCC 49037 / DSM 5601 / CCUG 37298 / CIP 103539 / LMG 7603 / PAl5) protein is PKHD-type hydroxylase GDI1238/Gdia_1949.